The sequence spans 500 residues: Putative antiporter subunit mnhD2 (500 aa).

The next 14 membrane-spanning stretches (helical) occupy residues 2 to 22 (MSNL…ILVF), 32 to 52 (ILSI…LIYV), 78 to 98 (LSLL…AYGF), 108 to 128 (FHLP…FLTS), 130 to 150 (LFNL…LVTL), 161 to 181 (IVYV…IGML), 209 to 229 (ISLV…FMWL), 240 to 260 (LAAL…IRFF), 273 to 293 (TLLV…VIAY), 308 to 328 (IGFI…GAIF), 330 to 350 (LAND…LVYM), 368 to 388 (FFGV…PFSG), 403 to 423 (GNYI…YSLF), and 450 to 470 (GLLS…PVVL).

This sequence belongs to the CPA3 antiporters (TC 2.A.63) subunit D family. May form a heterooligomeric complex that consists of seven subunits: mnhA2, mnhB2, mnhC2, mnhD2, mnhE2, mnhF2 and mnhG2.

It localises to the cell membrane. The protein is Putative antiporter subunit mnhD2 (mnhD2) of Staphylococcus epidermidis (strain ATCC 12228 / FDA PCI 1200).